Here is a 79-residue protein sequence, read N- to C-terminus: Acyl carrier protein (79 aa).

A Carrier domain is found at 2–77 (SDVLERVRKI…DAVKFIQERL (76 aa)). Serine 37 carries the post-translational modification O-(pantetheine 4'-phosphoryl)serine.

This sequence belongs to the acyl carrier protein (ACP) family. In terms of processing, 4'-phosphopantetheine is transferred from CoA to a specific serine of apo-ACP by AcpS. This modification is essential for activity because fatty acids are bound in thioester linkage to the sulfhydryl of the prosthetic group.

The protein resides in the cytoplasm. Its pathway is lipid metabolism; fatty acid biosynthesis. In terms of biological role, carrier of the growing fatty acid chain in fatty acid biosynthesis. The sequence is that of Acyl carrier protein from Phenylobacterium zucineum (strain HLK1).